The following is a 218-amino-acid chain: Small ribosomal subunit protein uS3 (218 aa).

In terms of domain architecture, KH type-2 spans 43 to 113 (IREHIERKLA…KVQVNVREVS (71 aa)).

It belongs to the universal ribosomal protein uS3 family. In terms of assembly, part of the 30S ribosomal subunit. Forms a tight complex with proteins S10 and S14.

Binds the lower part of the 30S subunit head. Binds mRNA in the 70S ribosome, positioning it for translation. The polypeptide is Small ribosomal subunit protein uS3 (Rubrobacter xylanophilus (strain DSM 9941 / JCM 11954 / NBRC 16129 / PRD-1)).